The sequence spans 275 residues: MPSNICKFFLTWWLIQQVTGLTGPLMLDTAPNAFDDQYEGCVNKMEEKAPLLLQEDFNMNAKLKVAWEEAKKRWNNIKPSRSYPKGFNDFHGTALVAYTGSIAVDFNRAVREFKENPGQFHYKAFHYYLTRALQLLSNGDCHSVYRGTKTRFHYTGAGSVRFGQFTSSSLSKKVAQSQEFFSDHGTLFIIKTCLGVYIKEFSFRPDQEEVLIPGYEVYQKVRTQGYNEIFLDSPKRKKSNYNCLYSSAGARESCVSLFLVVLPSLLVQLLCLAEP.

An N-terminal signal peptide occupies residues 1 to 20 (MPSNICKFFLTWWLIQQVTG). Intrachain disulfides connect cysteine 41–cysteine 243 and cysteine 141–cysteine 193. The TR mART core domain maps to 61–238 (AKLKVAWEEA…IFLDSPKRKK (178 aa)). NAD(+) is bound by residues tyrosine 98, arginine 146, and glutamine 164. Arginine 146 is a catalytic residue. The active site involves serine 167. Residue serine 202 participates in NAD(+) binding. Residue arginine 204 is modified to ADP-ribosylarginine; by autocatalysis. Glutamate 209 is a catalytic residue. Residue serine 246 is the site of GPI-anchor amidated serine attachment. Positions 247-275 (SAGARESCVSLFLVVLPSLLVQLLCLAEP) are cleaved as a propeptide — removed in mature form.

The protein belongs to the Arg-specific ADP-ribosyltransferase family. In terms of tissue distribution, postthymic T-cells.

It localises to the cell membrane. The enzyme catalyses L-arginyl-[protein] + NAD(+) = N(omega)-(ADP-D-ribosyl)-L-arginyl-[protein] + nicotinamide + H(+). It carries out the reaction NAD(+) + H2O = ADP-D-ribose + nicotinamide + H(+). In terms of biological role, has both NAD(+) glycohydrolase and ADP-ribosyltransferase activity (to a lesser extent). This Rattus norvegicus (Rat) protein is T-cell ecto-ADP-ribosyltransferase 2 (Art2b).